The following is a 495-amino-acid chain: Meiosis-specific nuclear structural protein 1 (495 aa).

The interval 1–315 (MASIRRTLSF…RLEEMLRQRE (315 aa)) is interaction with BBOF1. Coiled coils occupy residues 61–215 (QDEQ…EKLM) and 245–361 (IEEF…QMAL). Residues 172–199 (EESAAEDKRNQAKAQYSHDLEKQLEEQG) form a disordered region.

This sequence belongs to the MNS1 family. As to quaternary structure, able to form oligomers. Microtubule inner protein component of sperm flagellar doublet microtubules. Interacts with ODAD1. Interacts with BBOF1. Expressed in trachea multiciliated cells.

The protein localises to the nucleus. It localises to the cytoplasm. The protein resides in the cytoskeleton. Its subcellular location is the cilium axoneme. It is found in the flagellum axoneme. Microtubule inner protein (MIP) part of the dynein-decorated doublet microtubules (DMTs) in cilia axoneme, which is required for motile cilia beating. May play a role in the control of meiotic division and germ cell differentiation through regulation of pairing and recombination during meiosis. Required for sperm flagella assembly. May play a role in the assembly and function of the outer dynein arm-docking complex (ODA-DC). ODA-DC mediates outer dynein arms (ODA) binding onto the axonemal doublet microtubules. The protein is Meiosis-specific nuclear structural protein 1 (MNS1) of Bos taurus (Bovine).